Consider the following 514-residue polypeptide: Zinc finger CCCH-type with G patch domain-containing protein (514 aa).

Residues 96–129 are disordered; the sequence is GEEPQPPGAGDGASTGSKDSEEEEEEEDGSSGMK. The span at 115-124 shows a compositional bias: acidic residues; that stretch reads SEEEEEEEDG. The C3H1-type zinc finger occupies 171-197; the sequence is KAMKPCPFFLDGKCRFDDSCRFSHGQV. Disordered regions lie at residues 262–288, 363–422, and 494–514; these read IPPLRGSDSSSSDDDDDDEEEDDAAED, QQRK…AAER, and EEHSLQREQRKADTHKKMTEF. A compositionally biased stretch (acidic residues) spans 272–287; it reads SSDDDDDDEEEDDAAE. The 59-residue stretch at 315 to 373 folds into the G-patch domain; the sequence is TRGIGSKLLARMGYEIGKGLGRNAEGRVEPIQAVLLPKGKSLDQCIEMQQRKKAGGKRE. A compositionally biased stretch (basic residues) spans 365-383; sequence RKKAGGKREHKAGKRRPRA.

Its subcellular location is the nucleus. Its function is as follows. Transcription repressor that specifically binds the 5'-GGAG[GA]A[GA]A-3' consensus sequence. Represses transcription by recruiting the chromatin multiprotein complex NuRD to target promoters. Negatively regulates expression of EGFR, a gene involved in cell proliferation, survival and migration. This chain is Zinc finger CCCH-type with G patch domain-containing protein (zgpat), found in Xenopus tropicalis (Western clawed frog).